A 444-amino-acid chain; its full sequence is Tubulin beta chain (444 aa).

GTP is bound by residues glutamine 11, glutamate 69, serine 138, glycine 142, threonine 143, glycine 144, asparagine 204, and asparagine 226. Glutamate 69 is a binding site for Mg(2+).

This sequence belongs to the tubulin family. In terms of assembly, dimer of alpha and beta chains. A typical microtubule is a hollow water-filled tube with an outer diameter of 25 nm and an inner diameter of 15 nM. Alpha-beta heterodimers associate head-to-tail to form protofilaments running lengthwise along the microtubule wall with the beta-tubulin subunit facing the microtubule plus end conferring a structural polarity. Microtubules usually have 13 protofilaments but different protofilament numbers can be found in some organisms and specialized cells. It depends on Mg(2+) as a cofactor.

The protein resides in the cytoplasm. Its subcellular location is the cytoskeleton. In terms of biological role, tubulin is the major constituent of microtubules, a cylinder consisting of laterally associated linear protofilaments composed of alpha- and beta-tubulin heterodimers. Microtubules grow by the addition of GTP-tubulin dimers to the microtubule end, where a stabilizing cap forms. Below the cap, tubulin dimers are in GDP-bound state, owing to GTPase activity of alpha-tubulin. This chain is Tubulin beta chain, found in Euplotoides octocarinatus (Freshwater ciliate).